The primary structure comprises 328 residues: Testis-specific serine/threonine-protein kinase 4 (328 aa).

The Protein kinase domain maps to 25 to 293 (YEVGKAIGHG…ILDIIKDSWV (269 aa)). Residues 31 to 39 (IGHGSYGSV) and K54 contribute to the ATP site. The active-site Proton acceptor is D148. T197 is subject to Phosphothreonine.

It belongs to the protein kinase superfamily. CAMK Ser/Thr protein kinase family. Homodimer. Interacts with HSP90; this interaction stabilizes and activates TSSK4. Interacts with ODF2 (via C-terminus); this interaction promotes ODF2 phosphorylation on 'Ser-95'. May interact with CREM. Interacts with CREB1; this interaction facilitates phosphorylation on 'Ser-133'. Interacts with QRICH2. Mg(2+) serves as cofactor. Post-translationally, activated by autophosphorylation on Thr-197. ODF2 potentiates the autophosphorylation activity of TSSK4 at Thr-197. In terms of processing, ubiquitinated; HSP90 activity negatively regulates ubiquitination and degradation. In terms of tissue distribution, expressed only in the testis.

The protein resides in the cytoplasmic vesicle. The protein localises to the secretory vesicle. Its subcellular location is the acrosome. It is found in the cell projection. It localises to the cilium. The protein resides in the flagellum. It catalyses the reaction L-seryl-[protein] + ATP = O-phospho-L-seryl-[protein] + ADP + H(+). It carries out the reaction L-threonyl-[protein] + ATP = O-phospho-L-threonyl-[protein] + ADP + H(+). Its activity is regulated as follows. Activated by phosphorylation on Thr-197. In terms of biological role, serine/threonine kinase which is involved in male germ cell development and in mature sperm function. May be involved in the Cre/Creb signaling pathway. Phosphorylates CREB1 on 'Ser-133' in vitro and can stimulate Cre/Creb pathway in cells. Phosphorylates CREM on 'Ser-116' in vitro. Phosphorylates ODF2 on 'Ser-95'. This Homo sapiens (Human) protein is Testis-specific serine/threonine-protein kinase 4.